A 378-amino-acid chain; its full sequence is Protein RecA (378 aa).

The tract at residues 1 to 20 (MAAKKDKSVPDSKITDKEGK) is disordered. 80 to 87 (GAESSGKT) provides a ligand contact to ATP. The tract at residues 344–378 (GPVDKKKKKSKKEASSDDTDDENLEIDDAIDENND) is disordered. Acidic residues predominate over residues 359–378 (SDDTDDENLEIDDAIDENND).

Belongs to the RecA family.

It is found in the cytoplasm. In terms of biological role, can catalyze the hydrolysis of ATP in the presence of single-stranded DNA, the ATP-dependent uptake of single-stranded DNA by duplex DNA, and the ATP-dependent hybridization of homologous single-stranded DNAs. It interacts with LexA causing its activation and leading to its autocatalytic cleavage. This chain is Protein RecA, found in Fusobacterium nucleatum subsp. nucleatum (strain ATCC 25586 / DSM 15643 / BCRC 10681 / CIP 101130 / JCM 8532 / KCTC 2640 / LMG 13131 / VPI 4355).